The primary structure comprises 485 residues: Probable trichothecene esterase SAT6 (485 aa).

Residues 1 to 23 (MPQDPNTTLQMSSSKPSLSDLSV) are disordered. Over residues 9–23 (LQMSSSKPSLSDLSV) the composition is skewed to low complexity. Residues serine 262, aspartate 406, and histidine 438 each act as charge relay system in the active site.

It belongs to the AB hydrolase superfamily. Lipase family.

It participates in mycotoxin biosynthesis. In terms of biological role, probable trichothecene esterase; part of the satratoxin SC1 cluster involved in the biosynthesis of satratoxins, trichothecene mycotoxins that are associated with human food poisonings. Satratoxins are suggested to be made by products of multiple gene clusters (SC1, SC2 and SC3) that encode 21 proteins in all, including polyketide synthases, acetyltransferases, and other enzymes expected to modify the trichothecene skeleton. SC1 encodes 10 proteins, SAT1 to SAT10. The largest are SAT8, which encodes a putative polyketide synthase (PKS) with a conventional non-reducing architecture, and SAT10, a putative protein containing four ankyrin repeats and thus may be involved in protein scaffolding. The putative short-chain reductase SAT3 may assist the PKS in some capacity. SAT6 contains a secretory lipase domain and acts probably as a trichothecene esterase. SAT5 encodes a putative acetyltransferase, and so, with SAT6, may affect endogenous protection from toxicity. The probable transcription factor SAT9 may regulate the expression of the SC1 cluster. SC2 encodes proteins SAT11 to SAT16, the largest of which encodes the putative reducing PKS SAT13. SAT11 is a cytochrome P450 monooxygenase, while SAT14 and SAT16 are probable acetyltransferases. The SC2 cluster may be regulated by the transcription factor SAT15. SC3 is a small cluster that encodes 5 proteins, SAT17 to SAT21. SAT21 is a putative MFS-type transporter which may have a role in exporting secondary metabolites. The four other proteins putatively encoded in SC3 include the taurine hydroxylase-like protein SAT17, the O-methyltransferase SAT18, the acetyltransferase SAT19, and the Cys6-type zinc finger SAT20, the latter being probably involved in regulation of SC3 expression. The protein is Probable trichothecene esterase SAT6 of Stachybotrys chartarum (strain CBS 109288 / IBT 7711) (Toxic black mold).